Consider the following 1034-residue polypeptide: Integrin alpha-V (1034 aa).

Residues 1–19 (MAALRASLLLSCALTAARA) form the signal peptide. The Extracellular portion of the chain corresponds to 20 to 978 (FNLDAERPAV…WGIQPQPMPV (959 aa)). FG-GAP repeat units follow at residues 21–86 (NLDA…RNCQ), 97–158 (DFAP…VEYA), 161–213 (RSTT…LAKY), 225–279 (QLAT…GKNM), 280–345 (SSMY…GGFQ), 346–403 (IAKL…GLNA), and 407–470 (RILE…VNPT). Asn-62 is a glycosylation site (N-linked (GlcNAc...) asparagine). 3 disulfides stabilise this stretch: Cys-77–Cys-85, Cys-126–Cys-146, and Cys-160–Cys-173. 4 residues coordinate Ca(2+): Asp-248, Asp-252, Ile-254, and Asp-256. 2 N-linked (GlcNAc...) asparagine glycosylation sites follow: Asn-278 and Asn-284. 15 residues coordinate Ca(2+): Asp-302, Asn-304, Asp-306, Tyr-308, Asp-310, Asp-367, Asp-369, Asp-371, Phe-373, Asp-375, Asp-431, Asp-433, Asn-435, Tyr-437, and Asp-439. Cystine bridges form between Cys-479-Cys-488 and Cys-494-Cys-551. N-linked (GlcNAc...) asparagine glycans are attached at residues Asn-540 and Asn-601. Intrachain disulfides connect Cys-612–Cys-618 and Cys-684–Cys-697. N-linked (GlcNAc...) asparagine glycosylation is found at Asn-690, Asn-821, Asn-837, and Asn-860. 2 disulfides stabilise this stretch: Cys-838-Cys-900 and Cys-890-Cys-895. Asn-931, Asn-951, Asn-959, and Asn-966 each carry an N-linked (GlcNAc...) asparagine glycan. The helical transmembrane segment at 979–1002 (PVWVIILAVLAGLLLLAVLVLVMY) threads the bilayer. Residues 1003–1034 (RMGFFKRVRPPQEEQEREQLQPHENGEGTSEA) lie on the Cytoplasmic side of the membrane. A GFFKR motif motif is present at residues 1005 to 1009 (GFFKR). Positions 1013–1028 (PQEEQEREQLQPHENG) are enriched in basic and acidic residues. The tract at residues 1013 to 1034 (PQEEQEREQLQPHENGEGTSEA) is disordered.

Belongs to the integrin alpha chain family. Heterodimer of an alpha and a beta subunit. The alpha subunit is composed of a heavy and a light chain linked by a disulfide bond. Alpha-V (ITGAV) associates with either beta-1 (ITGB1), beta-3 (ITGB3), beta-5 (ITGB5), beta-6 (ITGB6) or beta-8 (ITGB8). Interacts with RAB25. Interacts with CIB1. Integrins ITGAV:ITGB3 and ITGAV:ITGB5 interact with FBLN5 (via N-terminus). ITGAV:ITGB3 and ITGAV:ITGB5 interact with CCN3. ITGAV:ITGB3 interacts with ADGRA2. ITGAV:ITGB3 interacts with FGF2; it is likely that FGF2 can simultaneously bind ITGAV:ITGB3 and FGF receptors. ITGAV:ITGB3 is found in a ternary complex with CX3CR1 and CX3CL1. ITGAV:ITGB3 is found in a ternary complex with NRG1 and ERBB3. ITGAV:ITGB3 is found in a ternary complex with FGF1 and FGFR1. ITGAV:ITGB3 is found in a ternary complex with IGF1 and IGF1R. ITGAV:ITGB3 interacts with IGF2. ITGAV:ITGB3 and ITGAV:ITGB6 interact with FBN1. ITGAV:ITGB3 interacts with CD9, CD81 and CD151 (via second extracellular domain). ITGAV:ITGB6 interacts with TGFB1.

It is found in the membrane. Its subcellular location is the cell junction. The protein resides in the focal adhesion. Its function is as follows. The alpha-V (ITGAV) integrins are receptors for vitronectin, cytotactin, fibronectin, fibrinogen, laminin, matrix metalloproteinase-2, osteopontin, osteomodulin, prothrombin, thrombospondin, TGFB1 and vWF. They recognize the sequence R-G-D in a wide array of ligands. Alpha-V integrins may play a role in embryo implantation, angiogenesis and wound healing. ITGAV:ITGB3 binds to fractalkine (CX3CL1) and may act as its coreceptor in CX3CR1-dependent fractalkine signaling. ITGAV:ITGB3 binds to NRG1 (via EGF domain) and this binding is essential for NRG1-ERBB signaling. ITGAV:ITGB3 binds to FGF1 and this binding is essential for FGF1 signaling. ITGAV:ITGB3 binds to FGF2 and this binding is essential for FGF2 signaling. ITGAV:ITGB3 binds to IGF1 and this binding is essential for IGF1 signaling. ITGAV:ITGB3 binds to IGF2 and this binding is essential for IGF2 signaling. ITGAV:ITGB3 binds to IL1B and this binding is essential for IL1B signaling. ITGAV:ITGB3 binds to PLA2G2A via a site (site 2) which is distinct from the classical ligand-binding site (site 1) and this induces integrin conformational changes and enhanced ligand binding to site 1. ITGAV:ITGB3 and ITGAV:ITGB6 act as receptors for fibrillin-1 (FBN1) and mediate R-G-D-dependent cell adhesion to FBN1. Integrin alpha-V/beta-6 or alpha-V/beta-8 (ITGAV:ITGB6 or ITGAV:ITGB8) mediates R-G-D-dependent release of transforming growth factor beta-1 (TGF-beta-1) from regulatory Latency-associated peptide (LAP), thereby playing a key role in TGF-beta-1 activation. ITGAV:ITGB3 acts as a receptor for CD40LG. ITGAV:ITGB3 acts as a receptor for IBSP and promotes cell adhesion and migration to IBSP. The polypeptide is Integrin alpha-V (ITGAV) (Gallus gallus (Chicken)).